A 599-amino-acid polypeptide reads, in one-letter code: Elongation factor 4 (599 aa).

In terms of domain architecture, tr-type G spans 5–187 (NRIRNFSIVA…AIVTRLPAPK (183 aa)). GTP is bound by residues 17 to 22 (DHGKST) and 134 to 137 (NKVD).

It belongs to the TRAFAC class translation factor GTPase superfamily. Classic translation factor GTPase family. LepA subfamily.

The protein resides in the cell inner membrane. The enzyme catalyses GTP + H2O = GDP + phosphate + H(+). Functionally, required for accurate and efficient protein synthesis under certain stress conditions. May act as a fidelity factor of the translation reaction, by catalyzing a one-codon backward translocation of tRNAs on improperly translocated ribosomes. Back-translocation proceeds from a post-translocation (POST) complex to a pre-translocation (PRE) complex, thus giving elongation factor G a second chance to translocate the tRNAs correctly. Binds to ribosomes in a GTP-dependent manner. In Jannaschia sp. (strain CCS1), this protein is Elongation factor 4.